The primary structure comprises 573 residues: Developmental and secondary metabolism regulator VEL1 (573 aa).

One can recognise a Velvet domain in the interval 26–220; the sequence is NRHLWYQLTV…ADQGCRVRIR (195 aa). The Nuclear localization signal motif lies at 40–45; the sequence is ERARAC. Residues 222-520 form a disordered region; that stretch reads DVRMRKRDGK…STGGKRKHDH (299 aa). Residues 230 to 245 show a composition bias toward basic and acidic residues; that stretch reads GKGSGFDRRGEEEYSR. 2 stretches are compositionally biased toward pro residues: residues 291–310 and 341–351; these read APPP…PPAA and APIPPATPTGP. The span at 352–363 shows a compositional bias: low complexity; it reads YPTSSAAPSPYA. The span at 379 to 389 shows a compositional bias: pro residues; sequence PPAPSASPAPP. Positions 432-448 are enriched in polar residues; the sequence is TPASQPTYSTPASQPTY. Pro residues predominate over residues 458–475; it reads SAPPPAPYSAPAPPPPRP. A PEST region spans residues 476–504; sequence SMSQSSLAPLKIASLVSPLPPIEAQTEPL.

This sequence belongs to the velvet family. VeA subfamily. Component of the heterotrimeric velvet complex composed of LAE1, VEL1 and VEL2; VEL1 acting as a bridging protein between LAE1 and VEL2. Interacts with LAE1.

The protein resides in the nucleus. It localises to the cytoplasm. Its function is as follows. Component of the velvet transcription factor complex that controls sexual/asexual developmental ratio in response to light, promoting sexual development in the darkness while stimulating asexual sporulation under illumination. The velvet complex hat acts as a global regulator for secondary metabolite gene expression. Regulates expression of the carbohydrate-active enzyme gene clusters. The chain is Developmental and secondary metabolism regulator VEL1 from Hypocrea jecorina (strain QM6a) (Trichoderma reesei).